Here is a 194-residue protein sequence, read N- to C-terminus: ATP-dependent Clp protease proteolytic subunit (194 aa).

Catalysis depends on serine 98, which acts as the Nucleophile. Residue histidine 123 is part of the active site.

Belongs to the peptidase S14 family. Fourteen ClpP subunits assemble into 2 heptameric rings which stack back to back to give a disk-like structure with a central cavity, resembling the structure of eukaryotic proteasomes.

It is found in the cytoplasm. The enzyme catalyses Hydrolysis of proteins to small peptides in the presence of ATP and magnesium. alpha-casein is the usual test substrate. In the absence of ATP, only oligopeptides shorter than five residues are hydrolyzed (such as succinyl-Leu-Tyr-|-NHMec, and Leu-Tyr-Leu-|-Tyr-Trp, in which cleavage of the -Tyr-|-Leu- and -Tyr-|-Trp bonds also occurs).. Functionally, cleaves peptides in various proteins in a process that requires ATP hydrolysis. Has a chymotrypsin-like activity. Plays a major role in the degradation of misfolded proteins. In Clostridium tetani (strain Massachusetts / E88), this protein is ATP-dependent Clp protease proteolytic subunit.